We begin with the raw amino-acid sequence, 134 residues long: Glycine cleavage system H protein (134 aa).

A Lipoyl-binding domain is found at 24–106 (TVRVGITDYA…YGAGWLLDIQ (83 aa)). Lys-65 is subject to N6-lipoyllysine.

It belongs to the GcvH family. As to quaternary structure, the glycine cleavage system is composed of four proteins: P, T, L and H. (R)-lipoate serves as cofactor.

Functionally, the glycine cleavage system catalyzes the degradation of glycine. The H protein shuttles the methylamine group of glycine from the P protein to the T protein. The protein is Glycine cleavage system H protein of Mycobacterium bovis (strain ATCC BAA-935 / AF2122/97).